Here is a 301-residue protein sequence, read N- to C-terminus: MSVREKMLEILEGIDIRFKEPLHSYSYTKVGGEADYLVFPRNRFELARVVKFANQENIPWMVLGNASNIIVRDGGIRGFVILCDKLNNVSVDGYTIEAEAGANLIETTRIALRHSLTGFEFACGIPGSVGGAVFMNAGAYGGEIAHILQSCKVLTKDGEIETLSAKDLAFGYRHSAIQESGAVVLSVKFALAPGTHQVIKQEMDRLTHLRELKQPLEYPSCGSVFKRPVGHFAGQLISEAGLKGYRIGGVEVSEKHAGFMINVADGTAKDYEDLIQSVIEKVKEHSGITLEREVRILGESK.

Positions 30-194 (VGGEADYLVF…LSVKFALAPG (165 aa)) constitute an FAD-binding PCMH-type domain. Residue arginine 173 is part of the active site. The active-site Proton donor is the serine 223. Glutamate 293 is an active-site residue.

Belongs to the MurB family. FAD is required as a cofactor.

The protein resides in the cytoplasm. It carries out the reaction UDP-N-acetyl-alpha-D-muramate + NADP(+) = UDP-N-acetyl-3-O-(1-carboxyvinyl)-alpha-D-glucosamine + NADPH + H(+). It participates in cell wall biogenesis; peptidoglycan biosynthesis. In terms of biological role, cell wall formation. The protein is UDP-N-acetylenolpyruvoylglucosamine reductase of Streptococcus pneumoniae (strain Hungary19A-6).